Here is a 657-residue protein sequence, read N- to C-terminus: Probable cobalt/nickel-exporting P-type ATPase (657 aa).

Helical transmembrane passes span 40 to 60, 62 to 82, 101 to 121, 268 to 288, and 299 to 319; these read WATVALLLFLAGLVAQLNGAP, AMWWTLYLACYLAGGWGSAWA, AAVGAVAIGQIFDGALLIVIF, LGMVAATLALIVIPLMFGADL, and MIVASPCAVVLATMPPLLSAI. Catalysis depends on aspartate 347, which acts as the 4-aspartylphosphate intermediate. Residues aspartate 543 and aspartate 547 each contribute to the Mg(2+) site. Residues 596–618 form a helical membrane-spanning segment; the sequence is VVTVNLAIAATFIAVLVLWDLFG.

It belongs to the cation transport ATPase (P-type) (TC 3.A.3) family. Type IB subfamily.

It is found in the cell membrane. Functionally, involved in heavy metal homeostasis. Probably exports nickel and cobalt ions out of the cell. This chain is Probable cobalt/nickel-exporting P-type ATPase (ctpD), found in Mycobacterium bovis (strain ATCC BAA-935 / AF2122/97).